The chain runs to 1108 residues: Isoleucine--tRNA ligase (1108 aa).

The 'HIGH' region signature appears at 53–63; that stretch reads PFANGLPHYGH. The 'KMSKS' region signature appears at 654–658; sequence KLSKR. K657 contributes to the ATP binding site.

This sequence belongs to the class-I aminoacyl-tRNA synthetase family. IleS type 2 subfamily. As to quaternary structure, monomer. Zn(2+) serves as cofactor.

It is found in the cytoplasm. The catalysed reaction is tRNA(Ile) + L-isoleucine + ATP = L-isoleucyl-tRNA(Ile) + AMP + diphosphate. In terms of biological role, catalyzes the attachment of isoleucine to tRNA(Ile). As IleRS can inadvertently accommodate and process structurally similar amino acids such as valine, to avoid such errors it has two additional distinct tRNA(Ile)-dependent editing activities. One activity is designated as 'pretransfer' editing and involves the hydrolysis of activated Val-AMP. The other activity is designated 'posttransfer' editing and involves deacylation of mischarged Val-tRNA(Ile). The protein is Isoleucine--tRNA ligase of Rickettsia bellii (strain RML369-C).